Here is a 515-residue protein sequence, read N- to C-terminus: Alpha-1B adrenergic receptor (515 aa).

At 1–45 (MNPDLDTGHNTSAPAHWGELKDDNFTGPNQTSSNSTLPQLDVTRA) the chain is on the extracellular side. N10, N24, and N34 each carry an N-linked (GlcNAc...) asparagine glycan. The helical transmembrane segment at 46–70 (ISVGLVLGAFILFAIVGNILVILSV) threads the bilayer. The Cytoplasmic segment spans residues 71–83 (ACNRHLRTPTNYF). Residues 84–105 (IVNLAIADLLLSFTVLPFSATL) traverse the membrane as a helical segment. The Extracellular segment spans residues 106–115 (EVLGYWVLGR). Residues 116–141 (IFCDIWAAVDVLCCTASILSLCAISI) form a helical membrane-spanning segment. C118 and C195 form a disulfide bridge. Topologically, residues 142 to 161 (DRYIGVRYSLQYPTLVTRRK) are cytoplasmic. The chain crosses the membrane as a helical span at residues 162–182 (AILALLSVWVLSTVISIGPLL). Topologically, residues 183-201 (GWKEPAPNDDKECGVTEEP) are extracellular. The chain crosses the membrane as a helical span at residues 202–224 (FYALFSSLGSFYIPLAVILVMYC). The Cytoplasmic segment spans residues 225 to 295 (RVYIVAKRTT…FSREKKAAKT (71 aa)). Phosphothreonine is present on T264. Residues 296 to 319 (LGIVVGMFILCWLPFFIALPLGSL) form a helical membrane-spanning segment. Residues 320–326 (FSTLKPP) are Extracellular-facing. Residues 327–351 (DAVFKVVFWLGYFNSCLNPIIYPCS) form a helical membrane-spanning segment. Residues 352 to 515 (SKEFKRAFMR…SNMPLAPGHF (164 aa)) lie on the Cytoplasmic side of the membrane. The S-palmitoyl cysteine moiety is linked to residue C365. The Nuclear localization signal motif lies at 368–378 (RGGRRRRRRRR). Disordered regions lie at residues 392–430 (GGSLERSQSRKDSLDDSGSCMSGTQRTLPSASPSPGYLG) and 474–515 (LGDP…PGHF). 2 stretches are compositionally biased toward polar residues: residues 410 to 424 (SCMSGTQRTLPSASP) and 484 to 498 (GDTSNGGCDTTTDLA).

Belongs to the G-protein coupled receptor 1 family. Adrenergic receptor subfamily. ADRA1B sub-subfamily. Homo- and heterooligomer. Heterooligomerizes with ADRA1B homooligomers in cardiac myocytes. Interacts with CAVIN4.

The protein localises to the nucleus membrane. It is found in the cell membrane. The protein resides in the cytoplasm. Its subcellular location is the membrane. It localises to the caveola. Functionally, this alpha-adrenergic receptor mediates its action by association with G proteins that activate a phosphatidylinositol-calcium second messenger system. Its effect is mediated by G(q) and G(11) proteins. Nuclear ADRA1A-ADRA1B heterooligomers regulate phenylephrine (PE)-stimulated ERK signaling in cardiac myocytes. The sequence is that of Alpha-1B adrenergic receptor (Adra1b) from Rattus norvegicus (Rat).